The following is a 2208-amino-acid chain: Glutamate synthase 1 [NADH], chloroplastic (2208 aa).

A chloroplast-targeting transit peptide spans 1–49 (MSAASSSSVLHLRTNQQLLSLRSLKNSTSVASQLAVTSGVSRRRSCTAR). The active-site Nucleophile is the C117. Residues 117-521 (CGVGFVAELS…PGMMLLVDFE (405 aa)) enclose the Glutamine amidotransferase type-2 domain. The segment at 1040–1067 (GKSNTGEGGELPSRMEPLADGSRNPKRS) is disordered. An FMN-binding site is contributed by 1211 to 1268 (LAETHQTLVANDLRGRTVLQTDGQLKTGRDVAVAALLGAEEFGFSTAPLITLGCIMMR). [3Fe-4S] cluster contacts are provided by C1264, C1270, and C1275. 1995–2009 (GGGDTGTDCIGTSIR) is a binding site for NAD(+).

This sequence belongs to the glutamate synthase family. Monomer. [3Fe-4S] cluster serves as cofactor. It depends on FAD as a cofactor. The cofactor is FMN. In terms of tissue distribution, highly expressed in roots and at low levels in leaves.

Its subcellular location is the plastid. The protein localises to the chloroplast. It catalyses the reaction 2 L-glutamate + NAD(+) = L-glutamine + 2-oxoglutarate + NADH + H(+). It participates in amino-acid biosynthesis; L-glutamate biosynthesis via GLT pathway; L-glutamate from 2-oxoglutarate and L-glutamine (NAD(+) route): step 1/1. Its pathway is energy metabolism; nitrogen metabolism. In terms of biological role, involved in glutamate biosynthesis. Required for non-photorespiratory ammonium assimilation. Probably involved in primary ammonium assimilation in roots. In Arabidopsis thaliana (Mouse-ear cress), this protein is Glutamate synthase 1 [NADH], chloroplastic (GLT1).